The primary structure comprises 376 residues: Zinc finger CCCH domain-containing protein C337.12 (376 aa).

Residues 2–25 are a coiled coil; the sequence is NEQQLLENIASLAGAINQYKNEKE. The tract at residues 60-95 is disordered; that stretch reads SKSTAASPPYVIPSTSSNADDANKEPEKQSTSDYVS. Residues 80 to 89 are compositionally biased toward basic and acidic residues; the sequence is DANKEPEKQS. Positions 105–140 form a coiled coil; the sequence is KKNILEHDLQARKANLESYRAKLEKEYKTLAENKIQ. C3H1-type zinc fingers lie at residues 202–228, 229–256, 257–283, and 284–312; these read SPSAVYCRYYNANGICGKGAACRFVHE, PTRKTICPKFLNGRCNKAEDCNLSHELD, PRRIPACRYFLLGKCNNPNCRYVHIHY, and SENAPICFEFAKYGFCELGTSCKNQHILQ. The disordered stretch occupies residues 347–376; sequence SKTAGSINPEDSGSEIGSNSLESNLDFISV. Positions 349–369 are enriched in polar residues; that stretch reads TAGSINPEDSGSEIGSNSLES.

It is found in the nucleus. The polypeptide is Zinc finger CCCH domain-containing protein C337.12 (Schizosaccharomyces pombe (strain 972 / ATCC 24843) (Fission yeast)).